Here is a 216-residue protein sequence, read N- to C-terminus: Imidazole glycerol phosphate synthase subunit HisH (216 aa).

One can recognise a Glutamine amidotransferase type-1 domain in the interval 2–216 (RVAIIDYGSG…FIANFLKWKP (215 aa)). The Nucleophile role is filled by cysteine 88. Residues histidine 196 and glutamate 198 contribute to the active site.

Heterodimer of HisH and HisF.

The protein resides in the cytoplasm. The catalysed reaction is 5-[(5-phospho-1-deoxy-D-ribulos-1-ylimino)methylamino]-1-(5-phospho-beta-D-ribosyl)imidazole-4-carboxamide + L-glutamine = D-erythro-1-(imidazol-4-yl)glycerol 3-phosphate + 5-amino-1-(5-phospho-beta-D-ribosyl)imidazole-4-carboxamide + L-glutamate + H(+). It catalyses the reaction L-glutamine + H2O = L-glutamate + NH4(+). It participates in amino-acid biosynthesis; L-histidine biosynthesis; L-histidine from 5-phospho-alpha-D-ribose 1-diphosphate: step 5/9. Its function is as follows. IGPS catalyzes the conversion of PRFAR and glutamine to IGP, AICAR and glutamate. The HisH subunit catalyzes the hydrolysis of glutamine to glutamate and ammonia as part of the synthesis of IGP and AICAR. The resulting ammonia molecule is channeled to the active site of HisF. The sequence is that of Imidazole glycerol phosphate synthase subunit HisH from Brucella melitensis biotype 1 (strain ATCC 23456 / CCUG 17765 / NCTC 10094 / 16M).